Here is a 468-residue protein sequence, read N- to C-terminus: UDP-N-acetylmuramate--L-alanine ligase (468 aa).

114–120 (GTHGKTT) serves as a coordination point for ATP.

Belongs to the MurCDEF family.

Its subcellular location is the cytoplasm. The enzyme catalyses UDP-N-acetyl-alpha-D-muramate + L-alanine + ATP = UDP-N-acetyl-alpha-D-muramoyl-L-alanine + ADP + phosphate + H(+). Its pathway is cell wall biogenesis; peptidoglycan biosynthesis. In terms of biological role, cell wall formation. This is UDP-N-acetylmuramate--L-alanine ligase from Methylocella silvestris (strain DSM 15510 / CIP 108128 / LMG 27833 / NCIMB 13906 / BL2).